Consider the following 29-residue polypeptide: Cyclotide psyleio B (29 aa).

Residues 1-29 constitute a cross-link (cyclopeptide (Gly-Arg)); that stretch reads GDLPICGETCFGGTCNTPGCVCAWPVCNR. Intrachain disulfides connect cysteine 6-cysteine 20, cysteine 10-cysteine 22, and cysteine 15-cysteine 27.

In terms of processing, this is a cyclic peptide.

Its function is as follows. Probably participates in a plant defense mechanism. The chain is Cyclotide psyleio B from Psychotria brachyceras.